Reading from the N-terminus, the 141-residue chain is VLSGPDKTNVKNVFAKIGGHADAYGAETLERMFTTYPQTKTYFPHFDLHHGSAQIKTHGKKVVSALIDAANNIDDIYGALSKLSDLHAQKLRVDPVNFKLLGQCFLVVVAIHHPSLLTPEVHASLDKFLCAVGAVLTAKYR.

Residues 1 to 141 (VLSGPDKTNV…VGAVLTAKYR (141 aa)) form the Globin domain. H58 provides a ligand contact to O2. A heme b-binding site is contributed by H87.

Belongs to the globin family. In terms of assembly, heterotetramer of two alpha chains and two beta chains. Red blood cells.

Involved in oxygen transport from the lung to the various peripheral tissues. This is Hemoglobin subunit alpha-A (HBAA) from Rhea americana (Greater rhea).